The sequence spans 221 residues: Stromal cell-derived factor 2-like protein 1 (221 aa).

Residues 1–28 (MWGASRGRVAGPTLLGLLLALSVRSGGA) form the signal peptide. 3 consecutive MIR domains span residues 33 to 87 (AGLV…IRGG), 95 to 150 (GLPV…VRCS), and 151 to 205 (GQHW…AMEG). The residue at position 215 (Ser-215) is a Phosphoserine. The short motif at 218-221 (HDEL) is the Prevents secretion from ER element.

As to expression, ubiquitously expressed with high expression in the testis, ovary, uterus, and low expression in heart and skeletal muscle.

It localises to the endoplasmic reticulum lumen. In Mus musculus (Mouse), this protein is Stromal cell-derived factor 2-like protein 1 (Sdf2l1).